The following is a 238-amino-acid chain: ATP synthase subunit a (238 aa).

A run of 5 helical transmembrane segments spans residues 18-38 (LTLL…VFWA), 76-96 (YSLL…LGLF), 114-134 (NLAF…IEGV), 166-186 (SLAI…GLIV), and 193-213 (VYWW…SVFI).

Belongs to the ATPase A chain family. As to quaternary structure, F-type ATPases have 2 components, CF(1) - the catalytic core - and CF(0) - the membrane proton channel. CF(1) has five subunits: alpha(3), beta(3), gamma(1), delta(1), epsilon(1). CF(0) has three main subunits: a(1), b(2) and c(9-12). The alpha and beta chains form an alternating ring which encloses part of the gamma chain. CF(1) is attached to CF(0) by a central stalk formed by the gamma and epsilon chains, while a peripheral stalk is formed by the delta and b chains.

The protein localises to the cell membrane. Its function is as follows. Key component of the proton channel; it plays a direct role in the translocation of protons across the membrane. This chain is ATP synthase subunit a, found in Streptococcus pyogenes serotype M1.